The chain runs to 168 residues: ATP synthase subunit b, sodium ion specific (168 aa).

A helical transmembrane segment spans residues 9-29 (VSIDINMFWQIINFLILMFFF).

The protein belongs to the ATPase B chain family. As to quaternary structure, F-type ATPases have 2 components, F(1) - the catalytic core - and F(0) - the membrane proton channel. F(1) has five subunits: alpha(3), beta(3), gamma(1), delta(1), epsilon(1). F(0) has three main subunits: a(1), b(2) and c(10-14). The alpha and beta chains form an alternating ring which encloses part of the gamma chain. F(1) is attached to F(0) by a central stalk formed by the gamma and epsilon chains, while a peripheral stalk is formed by the delta and b chains.

The protein resides in the cell inner membrane. Functionally, f(1)F(0) ATP synthase produces ATP from ADP in the presence of a proton or sodium gradient. F-type ATPases consist of two structural domains, F(1) containing the extramembraneous catalytic core and F(0) containing the membrane proton channel, linked together by a central stalk and a peripheral stalk. During catalysis, ATP synthesis in the catalytic domain of F(1) is coupled via a rotary mechanism of the central stalk subunits to proton translocation. Component of the F(0) channel, it forms part of the peripheral stalk, linking F(1) to F(0). In Propionigenium modestum, this protein is ATP synthase subunit b, sodium ion specific (atpF).